The primary structure comprises 103 residues: Large ribosomal subunit protein bL21 (103 aa).

It belongs to the bacterial ribosomal protein bL21 family. In terms of assembly, part of the 50S ribosomal subunit. Contacts protein L20.

In terms of biological role, this protein binds to 23S rRNA in the presence of protein L20. This chain is Large ribosomal subunit protein bL21, found in Acetivibrio thermocellus (strain ATCC 27405 / DSM 1237 / JCM 9322 / NBRC 103400 / NCIMB 10682 / NRRL B-4536 / VPI 7372) (Clostridium thermocellum).